The sequence spans 132 residues: Arginine decarboxylase proenzyme (132 aa).

The active-site Schiff-base intermediate with substrate; via pyruvic acid is the Ser-70. The residue at position 70 (Ser-70) is a Pyruvic acid (Ser); by autocatalysis. His-75 serves as the catalytic Proton acceptor; for processing activity. The active-site Proton donor; for catalytic activity is the Cys-90.

It belongs to the prokaryotic AdoMetDC family. Type 1 subfamily. Heterooctamer of four alpha and four beta chains arranged as a tetramer of alpha/beta heterodimers. The cofactor is pyruvate. Is synthesized initially as an inactive proenzyme. Formation of the active enzyme involves a self-maturation process in which the active site pyruvoyl group is generated from an internal serine residue via an autocatalytic post-translational modification. Two non-identical subunits are generated from the proenzyme in this reaction, and the pyruvate is formed at the N-terminus of the alpha chain, which is derived from the carboxyl end of the proenzyme. The post-translation cleavage follows an unusual pathway, termed non-hydrolytic serinolysis, in which the side chain hydroxyl group of the serine supplies its oxygen atom to form the C-terminus of the beta chain, while the remainder of the serine residue undergoes an oxidative deamination to produce ammonia and the pyruvoyl group blocking the N-terminus of the alpha chain.

The catalysed reaction is L-arginine + H(+) = agmatine + CO2. It participates in amine and polyamine biosynthesis; agmatine biosynthesis; agmatine from L-arginine: step 1/1. Specifically catalyzes the decarboxylation of L-arginine to agmatine. Has no S-adenosylmethionine decarboxylase (AdoMetDC) activity. The protein is Arginine decarboxylase proenzyme of Aeropyrum pernix (strain ATCC 700893 / DSM 11879 / JCM 9820 / NBRC 100138 / K1).